Reading from the N-terminus, the 95-residue chain is Co-chaperonin GroES (95 aa).

It belongs to the GroES chaperonin family. As to quaternary structure, heptamer of 7 subunits arranged in a ring. Interacts with the chaperonin GroEL.

Its subcellular location is the cytoplasm. In terms of biological role, together with the chaperonin GroEL, plays an essential role in assisting protein folding. The GroEL-GroES system forms a nano-cage that allows encapsulation of the non-native substrate proteins and provides a physical environment optimized to promote and accelerate protein folding. GroES binds to the apical surface of the GroEL ring, thereby capping the opening of the GroEL channel. This is Co-chaperonin GroES from Chlorobium phaeovibrioides (strain DSM 265 / 1930) (Prosthecochloris vibrioformis (strain DSM 265)).